A 704-amino-acid polypeptide reads, in one-letter code: Tryptophan synthase (704 aa).

A tryptophan synthase alpha chain region spans residues 1 to 292; sequence MEAIKKVFEQ…QLTPNAETAK (292 aa). Catalysis depends on proton acceptor residues E49 and D60. The interval 293-704 is tryptophan synthase beta chain; it reads GVENILPARF…HVSSNAIPSK (412 aa). Residue K380 is modified to N6-(pyridoxal phosphate)lysine.

It in the N-terminal section; belongs to the TrpA family. This sequence in the C-terminal section; belongs to the TrpB family. Pyridoxal 5'-phosphate serves as cofactor.

The enzyme catalyses (1S,2R)-1-C-(indol-3-yl)glycerol 3-phosphate + L-serine = D-glyceraldehyde 3-phosphate + L-tryptophan + H2O. Its pathway is amino-acid biosynthesis; L-tryptophan biosynthesis; L-tryptophan from chorismate: step 5/5. The chain is Tryptophan synthase (TRP-1) from Coprinopsis cinerea (strain Okayama-7 / 130 / ATCC MYA-4618 / FGSC 9003) (Inky cap fungus).